The sequence spans 157 residues: Ribosomal RNA large subunit methyltransferase H (157 aa).

S-adenosyl-L-methionine is bound by residues Leu73, Gly105, and 124–129 (LSKMTF).

It belongs to the RNA methyltransferase RlmH family. In terms of assembly, homodimer.

The protein localises to the cytoplasm. The enzyme catalyses pseudouridine(1915) in 23S rRNA + S-adenosyl-L-methionine = N(3)-methylpseudouridine(1915) in 23S rRNA + S-adenosyl-L-homocysteine + H(+). Its function is as follows. Specifically methylates the pseudouridine at position 1915 (m3Psi1915) in 23S rRNA. This is Ribosomal RNA large subunit methyltransferase H from Christiangramia forsetii (strain DSM 17595 / CGMCC 1.15422 / KT0803) (Gramella forsetii).